A 714-amino-acid polypeptide reads, in one-letter code: Phenylalanine 2-monooxygenase precursor (714 aa).

Residues 1-15 constitute a propeptide, removed in mature form; occupies the channel of the substrate amino acid from the outside of the protein to the interior flavin ring in the precursor; that stretch reads MGVTVIPRLLGLKDE. Residues G2, G68, and 95–96 each bind FAD; that span reads EA. Residues 108–109 constitute a propeptide, linker peptide; sequence IK. Residues R120, 141–144, and V375 contribute to the FAD site; that span reads GAMR. R144 provides a ligand contact to substrate. Y537 is a binding site for substrate. FAD is bound by residues 652–653 and 660–662; these read SD and GWL. G660 lines the substrate pocket.

This sequence belongs to the phenylalanine 2-monooxygenase family. Heterotetramer composed of 2 alpha and 2 beta subunits. FAD serves as cofactor. Post-translationally, proteolytically cleaved to yield the active enzyme. Cleavage of the linkage between the 2 subunits causes reshaping of the oxygen channel and the hydrophobic environment around the flavin ring. Removal of the prosequence causes opening of the amino acid channel.

The catalysed reaction is L-phenylalanine + O2 = 2-phenylacetamide + CO2 + H2O. In terms of biological role, catalyzes both oxygenative decarboxylation and oxidative deamination, depending on the substrate used. Has high activity for L-Phe and L-Tyr, but relatively low activities for L-Met and L-Trp. L-Phe is mainly oxygenated and L-Met is mainly oxidized. In Pseudomonas sp, this protein is Phenylalanine 2-monooxygenase precursor.